We begin with the raw amino-acid sequence, 351 residues long: Fructose-1,6-bisphosphatase class 1 (351 aa).

Residues glutamate 94, aspartate 113, leucine 115, and aspartate 116 each coordinate Mg(2+). Substrate is bound by residues 116–119 (DGSS) and asparagine 207. Position 279 (glutamate 279) interacts with Mg(2+).

It belongs to the FBPase class 1 family. Homotetramer. Mg(2+) serves as cofactor.

The protein localises to the cytoplasm. The catalysed reaction is beta-D-fructose 1,6-bisphosphate + H2O = beta-D-fructose 6-phosphate + phosphate. It participates in carbohydrate biosynthesis; gluconeogenesis. This chain is Fructose-1,6-bisphosphatase class 1, found in Methylobacterium radiotolerans (strain ATCC 27329 / DSM 1819 / JCM 2831 / NBRC 15690 / NCIMB 10815 / 0-1).